Here is a 452-residue protein sequence, read N- to C-terminus: Elongation factor Tu, mitochondrial (452 aa).

Residues 1 to 43 (MAAATLLRATPLFSGLGAGPAPLLQGLLRPLKAQALPVLCRGL) constitute a mitochondrion transit peptide. Residues 55–251 (KPHVNVGTIG…AVDTYIPVPT (197 aa)) form the tr-type G domain. Residues 64–71 (GHVDHGKT) are G1. 5 residues coordinate GTP: D67, G69, K70, T71, and T72. T71 lines the Mg(2+) pocket. K79 carries the post-translational modification N6-acetyllysine. K88 is modified (N6-acetyllysine; alternate). The residue at position 88 (K88) is an N6-succinyllysine; alternate. Residues 105–109 (GITIN) form a G2 region. Residues 126-129 (DCPG) are G3. Positions 181, 184, 219, 220, and 221 each coordinate GTP. Residues 181 to 184 (NKAD) are G4. The interval 219–221 (SAL) is G5. The residue at position 234 (K234) is an N6-succinyllysine. K256 carries the post-translational modification N6-acetyllysine. T278 carries the phosphothreonine modification. At K286 the chain carries N6-succinyllysine. S312 carries the post-translational modification Phosphoserine. 2 positions are modified to N6-acetyllysine: K361 and K418.

Belongs to the TRAFAC class translation factor GTPase superfamily. Classic translation factor GTPase family. EF-Tu/EF-1A subfamily. In terms of assembly, interacts with NLRX1. Interacts with ATG16L1.

It is found in the mitochondrion. It carries out the reaction GTP + H2O = GDP + phosphate + H(+). Its function is as follows. GTP hydrolase that promotes the GTP-dependent binding of aminoacyl-tRNA to the A-site of ribosomes during protein biosynthesis. Also plays a role in the regulation of autophagy and innate immunity. Recruits ATG5-ATG12 and NLRX1 at mitochondria and serves as a checkpoint of the RIGI-MAVS pathway. In turn, inhibits RLR-mediated type I interferon while promoting autophagy. This Bos taurus (Bovine) protein is Elongation factor Tu, mitochondrial (TUFM).